The chain runs to 361 residues: Polyribonucleotide 5'-hydroxyl-kinase PH0197 (361 aa).

43–50 is an ATP binding site; it reads GDVDTGKT.

Requires a divalent metal cation as cofactor.

It catalyses the reaction a 5'-end dephospho-2'-deoxyribonucleoside-DNA + ATP = a 5'-end 5'-phospho-2'-deoxyribonucleoside-DNA + ADP + H(+). The catalysed reaction is a 5'-end dephospho-ribonucleoside-RNA + ATP = a 5'-end 5'-phospho-ribonucleoside-RNA + ADP + H(+). DNA kinase activity is inhibited by 250 mM sodium chloride whereas RNA kinase activity is unaffected. In terms of biological role, polynucleotide kinase that can phosphorylate the 5'-hydroxyl groups of both single-stranded RNA (ssRNA) and single-stranded DNA (ssDNA). Exhibits a strong preference for ssRNA. The protein is Polyribonucleotide 5'-hydroxyl-kinase PH0197 of Pyrococcus horikoshii (strain ATCC 700860 / DSM 12428 / JCM 9974 / NBRC 100139 / OT-3).